Consider the following 547-residue polypeptide: Large cysteine-rich periplasmic protein OmcB (547 aa).

Positions 1–22 (MNKLIRRAVTIFAVTSVASLFA) are cleaved as a signal peptide. Residues 45–84 (KAKDNTSHKSKKARKNHSKETPVNRKKVAPVHESKATGPK) form a disordered region. Basic residues predominate over residues 52 to 61 (HKSKKARKNH).

As to quaternary structure, part of a disulfide cross-linked outer membrane complex (COMC) composed of the major outer membrane porin (MOMP), the small cysteine-rich protein (OmcA) and the large cysteine-rich periplasmic protein (OmcB).

It is found in the periplasm. Functionally, in elementary bodies (EBs, the infectious stage, which is able to survive outside the host cell) provides the structural integrity of the outer envelope through disulfide cross-links with the small cysteine-rich protein and the major outer membrane protein. It has been described in publications as the Sarkosyl-insoluble COMC (Chlamydia outer membrane complex), and serves as the functional equivalent of peptidoglycan. The chain is Large cysteine-rich periplasmic protein OmcB (omcB) from Chlamydia trachomatis serovar L2 (strain ATCC VR-902B / DSM 19102 / 434/Bu).